A 387-amino-acid chain; its full sequence is S-adenosylmethionine synthase (387 aa).

H17 lines the ATP pocket. D19 contributes to the Mg(2+) binding site. E45 lines the K(+) pocket. The L-methionine site is built by E58 and Q101. The interval 101–111 (QSPDIAQGVDR) is flexible loop. Residues 168-170 (DAK), 234-235 (RF), D243, 249-250 (RK), A266, and K270 contribute to the ATP site. Position 243 (D243) interacts with L-methionine. K274 contributes to the L-methionine binding site.

This sequence belongs to the AdoMet synthase family. Homotetramer; dimer of dimers. It depends on Mg(2+) as a cofactor. Requires K(+) as cofactor.

The protein resides in the cytoplasm. The enzyme catalyses L-methionine + ATP + H2O = S-adenosyl-L-methionine + phosphate + diphosphate. It participates in amino-acid biosynthesis; S-adenosyl-L-methionine biosynthesis; S-adenosyl-L-methionine from L-methionine: step 1/1. Catalyzes the formation of S-adenosylmethionine (AdoMet) from methionine and ATP. The overall synthetic reaction is composed of two sequential steps, AdoMet formation and the subsequent tripolyphosphate hydrolysis which occurs prior to release of AdoMet from the enzyme. This is S-adenosylmethionine synthase from Bordetella petrii (strain ATCC BAA-461 / DSM 12804 / CCUG 43448).